Consider the following 207-residue polypeptide: Ras-related protein RABH1e (207 aa).

Residue 16–23 (GDQSVGKT) participates in GTP binding. Positions 38-46 (YQATIGIDF) match the Effector region motif. GTP-binding positions include 64-68 (DTAGQ), 122-125 (NKTD), and 152-153 (SA). S-geranylgeranyl cysteine attachment occurs at residues C205 and C207. C207 bears the Cysteine methyl ester mark.

Belongs to the small GTPase superfamily. Rab family.

The protein resides in the golgi apparatus membrane. Functionally, protein transport. Regulator of membrane traffic from the Golgi apparatus towards the endoplasmic reticulum (ER). This is Ras-related protein RABH1e (RABH1E) from Arabidopsis thaliana (Mouse-ear cress).